The sequence spans 399 residues: Bone morphogenetic protein 8A (399 aa).

The N-terminal stretch at 1-19 (MAMRPGPLWLLGLALCALG) is a signal peptide. Residues 20 to 260 (GGHGPRPPHT…ASQSPVRAPR (241 aa)) constitute a propeptide that is removed on maturation. A glycan (N-linked (GlcNAc...) asparagine) is linked at Asn-155. The disordered stretch occupies residues 257 to 286 (RAPRAARPLKRRQPKKTNELPHPNKLPGIF). 3 cysteine pairs are disulfide-bonded: Cys-298-Cys-364, Cys-327-Cys-396, and Cys-331-Cys-398. N-linked (GlcNAc...) asparagine glycosylation is present at Asn-340.

This sequence belongs to the TGF-beta family. As to quaternary structure, homodimer; disulfide-linked. As to expression, expressed in testis. expressed in trophoblast cells of the labyrinthine region of the placenta and in the inner root sheath of hair follicles of early postnatal skin. Expressed predominantly in the neonatal mouse spermatogonia.

It localises to the secreted. In terms of biological role, growth factor of the TGF-beta superfamily that plays important role in various biological processes, including spermatogenesis, osteogenesis, steroidogenesis as well as regulation of energy balance. Initiates the canonical BMP signaling cascade by associating with type I receptor BMPR1A and type II receptor BMPR2. Once all three components are bound together in a complex at the cell surface, BMPR2 phosphorylates and activates BMPR1A. In turn, BMPR1A propagates signal by phosphorylating SMAD1/5/8 that travel to the nucleus and act as activators and repressors of transcription of target genes. In addition, activates the SMAD2/3 pathway. The chain is Bone morphogenetic protein 8A (Bmp8a) from Mus musculus (Mouse).